Here is a 49-residue protein sequence, read N- to C-terminus: Large ribosomal subunit protein uL16 (49 aa).

The protein belongs to the universal ribosomal protein uL16 family. As to quaternary structure, part of the 50S ribosomal subunit.

Functionally, binds 23S rRNA and is also seen to make contacts with the A and possibly P site tRNAs. This Aquifex pyrophilus protein is Large ribosomal subunit protein uL16 (rplP).